A 367-amino-acid chain; its full sequence is Carbamoyl phosphate synthase small chain (367 aa).

The segment at 1–182 (MKLENKKGYL…PIFHPNTGDM (182 aa)) is CPSase. L-glutamine-binding residues include S50, G230, and G232. Residues 182–367 (MIVVVDCGIK…DKFRTMVTGK (186 aa)) enclose the Glutamine amidotransferase type-1 domain. Residue C258 is the Nucleophile of the active site. L-glutamine-binding residues include L259, Q262, N300, G302, and Y303. Residues H343 and E345 contribute to the active site.

It belongs to the CarA family. In terms of assembly, composed of two chains; the small (or glutamine) chain promotes the hydrolysis of glutamine to ammonia, which is used by the large (or ammonia) chain to synthesize carbamoyl phosphate. Tetramer of heterodimers (alpha,beta)4.

The enzyme catalyses hydrogencarbonate + L-glutamine + 2 ATP + H2O = carbamoyl phosphate + L-glutamate + 2 ADP + phosphate + 2 H(+). It carries out the reaction L-glutamine + H2O = L-glutamate + NH4(+). Its pathway is amino-acid biosynthesis; L-arginine biosynthesis; carbamoyl phosphate from bicarbonate: step 1/1. The protein operates within pyrimidine metabolism; UMP biosynthesis via de novo pathway; (S)-dihydroorotate from bicarbonate: step 1/3. Functionally, small subunit of the glutamine-dependent carbamoyl phosphate synthetase (CPSase). CPSase catalyzes the formation of carbamoyl phosphate from the ammonia moiety of glutamine, carbonate, and phosphate donated by ATP, constituting the first step of 2 biosynthetic pathways, one leading to arginine and/or urea and the other to pyrimidine nucleotides. The small subunit (glutamine amidotransferase) binds and cleaves glutamine to supply the large subunit with the substrate ammonia. The sequence is that of Carbamoyl phosphate synthase small chain from Saccharolobus solfataricus (strain ATCC 35092 / DSM 1617 / JCM 11322 / P2) (Sulfolobus solfataricus).